We begin with the raw amino-acid sequence, 67 residues long: Archaeal histone HAN1 subunit A (67 aa).

Interaction with DNA regions lie at residues 20 to 22 (RVS) and 54 to 57 (KTVK).

This sequence belongs to the archaeal histone HMF family. Heterodimer. Dimers then assemble into higher oligomers, with the DNA wrapped around the protein core.

Its subcellular location is the cytoplasm. It is found in the chromosome. In terms of biological role, binds and compact DNA (95 to 150 base pairs) to form nucleosome-like structures that contain positive DNA supercoils. Increases the resistance of DNA to thermal denaturation (in vitro). The protein is Archaeal histone HAN1 subunit A (han1A) of Thermococcus zilligii.